The primary structure comprises 325 residues: Putative gluconeogenesis factor (325 aa).

This sequence belongs to the gluconeogenesis factor family.

It is found in the cytoplasm. Required for morphogenesis under gluconeogenic growth conditions. The chain is Putative gluconeogenesis factor from Streptococcus pyogenes serotype M1.